Consider the following 196-residue polypeptide: Large ribosomal subunit protein uL14my (196 aa).

Residues 1 to 62 (MATALASKLS…TILKCVDNSC (62 aa)) constitute a mitochondrion transit peptide. Positions 148–175 (EKKGQNNSHGSKRKMEYNQPTGTRVFGP) are disordered.

The protein belongs to the universal ribosomal protein uL14 family. As to quaternary structure, part of the mitochondrial 50S ribosomal subunit. Mostly expressed in pistils and inflorescences, including floral organs and meristems, and, to a lower extent, in leaves.

It localises to the mitochondrion. Functionally, binds to 23S rRNA in mitochondrion. Required for the formation of the proximal region of the ovule primordium during floral organogenesis, thus participating in patterning and growth of ovule. Also regulates the initiation and/or maintenance of integument and embryo sac ontogenesis. Prevents inappropriate cell death in the young ovule. The protein is Large ribosomal subunit protein uL14my (HLL) of Arabidopsis thaliana (Mouse-ear cress).